Reading from the N-terminus, the 693-residue chain is MKVFCGRANPTTGSLEWLEEDEHYDYHQEIARSSYADMLHDKDRNIKYYQGIRAAVSRVKDKGQKALVLDIGTGTGLLSMMAVTAGADFCYAVEVFKPMAEAAVKIVEKNGFSDKIKVINKHSTEVTVGPDGDLPCRANILVTELFDTELIGEGALPSYEHAHKHLVQEDCEAVPHRATVYAQLVESKRMWSWNKLFPVRVQTGLGEQLIIPPSELERCPGAPSVYDIQLNQVSPADFTVLSDVLPMFSVDFSKQVSSSAACHSKQFVPLASGQAQVVLSWWDIEMDPEGKIKCTMAPFWAQTDPQELQWRDHWMQCVYFLPQEEPIMQGSPRCLAAHHDDYCVWYSLQRTSPDENNSAYQVRPVCDCQAHLLWNRPRFGEINDQDRTDHYARALRTMLMPGSICLCVSDGSLLSVLAHHLGAEQVFTVESSVASYRLMKRIFKVNHLEDKITVINKRPELLTSADLEGKKVSLLLGEPFFTTSLLPWHNLYFWYVRTSVDQHLAPGAVVMPQAASLHAVIVEFRDLWRIRSPCGDCEGFDVHIMDDMIKHSLDFRESREAEPQPLWEYPCRSLSEPRQILTFDFQQPIPQQPMQSRGVMELRRPGKSHGAVLWMEYQLTPDSTVSTGLMNPAEDKGDCCWNPHCKQAVYFLSATLDPSAPLDGPQSVSYAVEFHPLTGDITMEFRLADDTLN.

SAM-dependent MTase PRMT-type domains lie at 14 to 345 (SLEW…YCVW) and 358 to 684 (SAYQ…ITME). The residue at position 32 (Arg-32) is an Omega-N-methylarginine. Residues Glu-144 and Glu-153 contribute to the active site.

This sequence belongs to the class I-like SAM-binding methyltransferase superfamily. Protein arginine N-methyltransferase family. PRMT7 subfamily. Homodimer and heterodimer. Interacts with CTCFL, PRMT5 and SNRPD3.

The protein localises to the cytoplasm. It is found in the cytosol. The protein resides in the nucleus. It carries out the reaction L-arginyl-[protein] + S-adenosyl-L-methionine = N(omega)-methyl-L-arginyl-[protein] + S-adenosyl-L-homocysteine + H(+). Arginine methyltransferase that can both catalyze the formation of omega-N monomethylarginine (MMA) and symmetrical dimethylarginine (sDMA), with a preference for the formation of MMA. Specifically mediates the symmetrical dimethylation of arginine residues in the small nuclear ribonucleoproteins Sm D1 (SNRPD1) and Sm D3 (SNRPD3); such methylation being required for the assembly and biogenesis of snRNP core particles. Specifically mediates the symmetric dimethylation of histone H4 'Arg-3' to form H4R3me2s. Plays a role in gene imprinting by being recruited by CTCFL at the H19 imprinted control region (ICR) and methylating histone H4 to form H4R3me2s, possibly leading to recruit DNA methyltransferases at these sites. May also play a role in embryonic stem cell (ESC) pluripotency. Also able to mediate the arginine methylation of histone H2A and myelin basic protein (MBP) in vitro; the relevance of such results is however unclear in vivo. The sequence is that of Protein arginine N-methyltransferase 7 (Prmt7) from Rattus norvegicus (Rat).